Here is a 247-residue protein sequence, read N- to C-terminus: Aliphatic sulfonates import ATP-binding protein SsuB 3 (247 aa).

The ABC transporter domain occupies 28 to 242 (VSVRGLQRRY…ALRSILLEEL (215 aa)). Position 60–67 (60–67 (GESGCGKT)) interacts with ATP.

The protein belongs to the ABC transporter superfamily. Aliphatic sulfonates importer (TC 3.A.1.17.2) family. In terms of assembly, the complex is composed of two ATP-binding proteins (SsuB), two transmembrane proteins (SsuC) and a solute-binding protein (SsuA).

The protein localises to the cell inner membrane. The enzyme catalyses ATP + H2O + aliphatic sulfonate-[sulfonate-binding protein]Side 1 = ADP + phosphate + aliphatic sulfonateSide 2 + [sulfonate-binding protein]Side 1.. Its function is as follows. Part of the ABC transporter complex SsuABC involved in aliphatic sulfonates import. Responsible for energy coupling to the transport system. The chain is Aliphatic sulfonates import ATP-binding protein SsuB 3 from Paraburkholderia xenovorans (strain LB400).